A 287-amino-acid chain; its full sequence is Spore wall protein 7 (287 aa).

The first 19 residues, 1–19, serve as a signal peptide directing secretion; sequence MIKGLIYLFLFRCLEGRLA.

The protein belongs to the SWP7 family. In terms of assembly, interacts with SWP9.

The protein localises to the cytoplasm. It is found in the spore wall. Its subcellular location is the spore polar tube. Involved in adherence of spores to the host cell surface and in infection efficiency. This Nosema bombycis (strain CQ1 / CVCC 102059) (Microsporidian parasite) protein is Spore wall protein 7 (SWP7).